We begin with the raw amino-acid sequence, 446 residues long: D(1A) dopamine receptor (446 aa).

The Extracellular portion of the chain corresponds to 1 to 23; the sequence is MRTLNTSTMEGTGLVAERDFSFR. Residue N5 is glycosylated (N-linked (GlcNAc...) asparagine). A helical transmembrane segment spans residues 24 to 49; it reads ILTACFLSLLILSTLLGNTLVCAAVI. Over 50–60 the chain is Cytoplasmic; that stretch reads RFRHLRSKVTN. The chain crosses the membrane as a helical span at residues 61–87; that stretch reads FFVISLAVSDLLVAVLVMPWKAVAEIA. At 88 to 96 the chain is on the extracellular side; that stretch reads GFWPFGSFC. An intrachain disulfide couples C96 to C186. The helical transmembrane segment at 97–119 threads the bilayer; sequence NIWVAFDIMCSTASILNLCVISV. Residues 120–138 lie on the Cytoplasmic side of the membrane; the sequence is DRYWAISSPFRYERKMTPK. A helical transmembrane segment spans residues 139-163; the sequence is AAFILISVAWTLSVLISFIPVQLSW. Residues 164-192 are Extracellular-facing; it reads HKAKPTGPSEGNATSLGKTINNCDSSLSR. N175 carries N-linked (GlcNAc...) asparagine glycosylation. A helical transmembrane segment spans residues 193–218; that stretch reads TYAISSSLISFYIPVAIMIVTYTRIY. The Cytoplasmic portion of the chain corresponds to 219–272; sequence RIAQKQIRRISALERAAVHAKNCQTTTGNGNPMECSQPESSFKMSFKRETKVLK. A helical membrane pass occupies residues 273 to 299; the sequence is TLSVIMGVFVCCWLPFFILNCMVPFCG. The Extracellular portion of the chain corresponds to 300-312; that stretch reads SGETKPFCIDSIT. Residues 313–337 traverse the membrane as a helical segment; the sequence is FDVFVWFGWANSSLNPIIYAFNADF. Over 338–446 the chain is Cytoplasmic; it reads RKAFSTLLGC…PITQNGQHPT (109 aa). 2 S-palmitoyl cysteine lipidation sites follow: C347 and C351.

Belongs to the G-protein coupled receptor 1 family. Interacts with DNAJC14 via its C-terminus. Interacts with DRD2. Interacts with DORIP1.

The protein resides in the cell membrane. Its subcellular location is the endoplasmic reticulum membrane. The protein localises to the cell projection. It is found in the cilium membrane. It localises to the dendrite. The protein resides in the dendritic spine. Dopamine receptor whose activity is mediated by G proteins which activate adenylyl cyclase. The chain is D(1A) dopamine receptor (DRD1) from Bos taurus (Bovine).